The chain runs to 123 residues: PCNA-associated factor (123 aa).

The disordered stretch occupies residues 1–123 (MVRTKADCAG…SEEAADSGDE (123 aa)). A D-box motif is present at residues 26 to 37 (RKTFGSSSSGSN). A PIP-box motif is present at residues 66–77 (QKGIGDFFGSPS). Residues 83-85 (KEN) carry the KEN box motif. The Initiation motif signature appears at 93–105 (EAGGSGAGKKPRK). The segment covering 113 to 123 (PSEEAADSGDE) has biased composition (acidic residues).

As to quaternary structure, interacts with pcna.

The protein resides in the nucleus. It is found in the cytoplasm. It localises to the perinuclear region. Its function is as follows. PCNA-binding protein that acts as a regulator of DNA repair during DNA replication. Following DNA damage, the interaction with pcna is disrupted, facilitating the interaction between monoubiquitinated pcna and the translesion DNA synthesis DNA polymerase eta (polh) at stalled replisomes, facilitating the bypass of replication-fork-blocking lesions. Also acts as a regulator of centrosome number. The polypeptide is PCNA-associated factor (Xenopus laevis (African clawed frog)).